The sequence spans 83 residues: Cytochrome b559 subunit alpha (83 aa).

The chain crosses the membrane as a helical span at residues 21–35 (VIHSITIPSLFIAGW). Residue His-23 coordinates heme.

The protein belongs to the PsbE/PsbF family. Heterodimer of an alpha subunit and a beta subunit. PSII is composed of 1 copy each of membrane proteins PsbA, PsbB, PsbC, PsbD, PsbE, PsbF, PsbH, PsbI, PsbJ, PsbK, PsbL, PsbM, PsbT, PsbX, PsbY, PsbZ, Psb30/Ycf12, at least 3 peripheral proteins of the oxygen-evolving complex and a large number of cofactors. It forms dimeric complexes. The cofactor is heme b.

The protein resides in the plastid. It localises to the chloroplast thylakoid membrane. Functionally, this b-type cytochrome is tightly associated with the reaction center of photosystem II (PSII). PSII is a light-driven water:plastoquinone oxidoreductase that uses light energy to abstract electrons from H(2)O, generating O(2) and a proton gradient subsequently used for ATP formation. It consists of a core antenna complex that captures photons, and an electron transfer chain that converts photonic excitation into a charge separation. The sequence is that of Cytochrome b559 subunit alpha from Chara vulgaris (Common stonewort).